A 267-amino-acid chain; its full sequence is MAAEEEAAPLSGVGWAAGPESAPAGWSVITISVEGSAANLGKGFGHKGGYLCVSTAAPGSAGPVVTDVQVLSDRNPQPAGYSRAPEFPEPRSGVSRKKRLYVRLQPRGAAETAVFDIKLSGKSRAVPQYMKIGEIGSFAIWCKKGALPQCSPPPVPKPRTVSLGLKQLSLADSEQQAPGKPVAQSGSRHASFTLHNSADDGSSIYNLSAMDGVPFTLHPKFERSPKSDSSAILTDLTVKSLADIEKEYNYTFVVERTAAARLPPSIC.

The region spanning 7-146 is the MABP domain; the sequence is AAPLSGVGWA…SFAIWCKKGA (140 aa). Residues 154 to 159 carry the SH3-binding motif; the sequence is PVPKPR. The 50-residue stretch at 210–259 folds into the UMA domain; sequence MDGVPFTLHPKFERSPKSDSSAILTDLTVKSLADIEKEYNYTFVVERTAA.

This sequence belongs to the MVB12 family. Component of the ESCRT-I complex (endosomal sorting complex required for transport I).

It localises to the cytoplasm. Its subcellular location is the endosome. The protein resides in the late endosome membrane. Functionally, component of the ESCRT-I complex, a regulator of vesicular trafficking process. Required for the sorting of endocytic ubiquitinated cargos into multivesicular bodies. This chain is Multivesicular body subunit 12A (MVB12A), found in Gallus gallus (Chicken).